The sequence spans 93 residues: Small ribosomal subunit protein uS19c (93 aa).

Belongs to the universal ribosomal protein uS19 family.

The protein resides in the plastid. It is found in the chloroplast. Protein S19 forms a complex with S13 that binds strongly to the 16S ribosomal RNA. In Stigeoclonium helveticum (Green alga), this protein is Small ribosomal subunit protein uS19c.